The sequence spans 274 residues: Phosphate import ATP-binding protein PstB (274 aa).

In terms of domain architecture, ABC transporter spans 28 to 269; that stretch reads VTVRDLNFYY…PNDRRTQDYI (242 aa). 60 to 67 serves as a coordination point for ATP; that stretch reads GPSGCGKS.

This sequence belongs to the ABC transporter superfamily. Phosphate importer (TC 3.A.1.7) family. The complex is composed of two ATP-binding proteins (PstB), two transmembrane proteins (PstC and PstA) and a solute-binding protein (PstS).

The protein localises to the cell inner membrane. The enzyme catalyses phosphate(out) + ATP + H2O = ADP + 2 phosphate(in) + H(+). Its function is as follows. Part of the ABC transporter complex PstSACB involved in phosphate import. Responsible for energy coupling to the transport system. This is Phosphate import ATP-binding protein PstB from Rhodopseudomonas palustris (strain HaA2).